Here is a 200-residue protein sequence, read N- to C-terminus: MIVLGLTGSIGMGKTTAAGMFAEAGVPVYSADDAVHRLYSGRAAPLIEATFPGTVENGIVNREKLFKAVIGQPEAIKKLEAVVHPLVREEEDAFRREAEKSGAAIALVDIPLLFETGAEKRVDKVVVVSAPADIQHTRVLARPGMTQEKLKAILLRQIPDAEKRSRADFVLDTSGSFDDLRRQIAEIITGLSGKPAAATR.

Residues 3-200 form the DPCK domain; it reads VLGLTGSIGM…LSGKPAAATR (198 aa). ATP is bound at residue 11 to 16; that stretch reads GMGKTT.

The protein belongs to the CoaE family.

It is found in the cytoplasm. It catalyses the reaction 3'-dephospho-CoA + ATP = ADP + CoA + H(+). The protein operates within cofactor biosynthesis; coenzyme A biosynthesis; CoA from (R)-pantothenate: step 5/5. Functionally, catalyzes the phosphorylation of the 3'-hydroxyl group of dephosphocoenzyme A to form coenzyme A. This Brucella abortus (strain 2308) protein is Dephospho-CoA kinase.